Here is a 487-residue protein sequence, read N- to C-terminus: L-tartrate/succinate antiporter (487 aa).

The next 14 membrane-spanning stretches (helical) occupy residues 10–30 (YLAPLAVIAIIALIPVPAGLE), 33–53 (TWLYFAVFTGVIVGLILEPVP), 54–74 (GAVVAMVGISIIAILSPWLLF), 93–113 (WAVSGFSNSVIWLIFAAFMFG), 137–157 (TLFLGYAVMFSELILAPVTPS), 189–209 (IGSYIMWMGIVADCVTSAIFL), 236–256 (FLGMLPLSILLVLLVPWLAYV), 292–312 (LIVGALVLWIFGGDYIDAAMV), 313–333 (GYSVVALMLLLRIISWDDIVS), 340–360 (VFFWLASLITLATGLNNTGFI), 370–390 (SLSGYSPTMVMVALIVVFYLL), 393–413 (FFASATAYTSALAPMMIAAAL), 418–438 (IPLPVFCLMVGAAIGLGSILT), and 465–485 (IFGLIFLVLLVITGLLWMPVV).

This sequence belongs to the SLC13A/DASS transporter (TC 2.A.47) family. DIT1 subfamily.

The protein resides in the cell inner membrane. It carries out the reaction (2R,3R)-tartrate(out) + succinate(in) = (2R,3R)-tartrate(in) + succinate(out). Its function is as follows. Catalyzes the uptake of tartrate in exchange for intracellular succinate. Essential for anaerobic L-tartrate fermentation. This chain is L-tartrate/succinate antiporter (ttdT), found in Shigella sonnei (strain Ss046).